Here is a 203-residue protein sequence, read N- to C-terminus: LexA repressor 2 (203 aa).

A DNA-binding region (H-T-H motif) is located at residues 28–48 (MREIARHLNVNGTLGVAKHLE). Residues Ser122 and Lys159 each act as for autocatalytic cleavage activity in the active site.

It belongs to the peptidase S24 family. As to quaternary structure, homodimer.

The catalysed reaction is Hydrolysis of Ala-|-Gly bond in repressor LexA.. Its function is as follows. Represses a number of genes involved in the response to DNA damage (SOS response), including recA and lexA. In the presence of single-stranded DNA, RecA interacts with LexA causing an autocatalytic cleavage which disrupts the DNA-binding part of LexA, leading to derepression of the SOS regulon and eventually DNA repair. The chain is LexA repressor 2 from Geobacter sulfurreducens (strain ATCC 51573 / DSM 12127 / PCA).